The following is a 54-amino-acid chain: Lectin alpha-1 chain (54 aa).

It belongs to the leguminous lectin family. Tetramer of two alpha and two beta chains.

The protein is Lectin alpha-1 chain of Lathyrus hirsutus (Rough pea).